Here is a 285-residue protein sequence, read N- to C-terminus: ATP synthase gamma chain (285 aa).

The protein belongs to the ATPase gamma chain family. In terms of assembly, F-type ATPases have 2 components, CF(1) - the catalytic core - and CF(0) - the membrane proton channel. CF(1) has five subunits: alpha(3), beta(3), gamma(1), delta(1), epsilon(1). CF(0) has three main subunits: a, b and c.

Its subcellular location is the cell inner membrane. Its function is as follows. Produces ATP from ADP in the presence of a proton gradient across the membrane. The gamma chain is believed to be important in regulating ATPase activity and the flow of protons through the CF(0) complex. This Protochlamydia amoebophila (strain UWE25) protein is ATP synthase gamma chain.